We begin with the raw amino-acid sequence, 326 residues long: Isoaspartyl peptidase/L-asparaginase (326 aa).

Residue threonine 185 is the Nucleophile of the active site. Residues 213-216 (RVGD) and 236-239 (TGHG) each bind substrate.

Belongs to the Ntn-hydrolase family. Heterodimer of an alpha and beta chain produced by autocleavage. This heterodimer may then dimerize in turn, giving rise to a heterotetramer. In terms of processing, cleaved into an alpha and beta chain by autocatalysis; this activates the enzyme. The N-terminal residue of the beta subunit is responsible for the nucleophile hydrolase activity. In terms of tissue distribution, high expression in the heart and brain while low to minimal expression in the other tissues. In ocular tissues, high levels is observed in the optic nerve and retina while relatively low levels of expression are detected in the iris-ciliary body, lens or retinal pigment epithelium.

Its subcellular location is the cytoplasm. The catalysed reaction is L-asparagine + H2O = L-aspartate + NH4(+). The enzyme catalyses Cleavage of a beta-linked Asp residue from the N-terminus of a polypeptide.. Functionally, has both L-asparaginase and beta-aspartyl peptidase activity. May be involved in the production of L-aspartate, which can act as an excitatory neurotransmitter in some brain regions. Is highly active with L-Asp beta-methyl ester. Besides, has catalytic activity toward beta-aspartyl dipeptides and their methyl esters, including beta-L-Asp-L-Phe, beta-L-Asp-L-Phe methyl ester (aspartame), beta-L-Asp-L-Ala, beta-L-Asp-L-Leu and beta-L-Asp-L-Lys. Does not have aspartylglucosaminidase activity and is inactive toward GlcNAc-L-Asn. Likewise, has no activity toward glutamine. This Mus musculus (Mouse) protein is Isoaspartyl peptidase/L-asparaginase (Asrgl1).